The following is a 124-amino-acid chain: Large ribosomal subunit protein bL21 (124 aa).

It belongs to the bacterial ribosomal protein bL21 family. Part of the 50S ribosomal subunit. Contacts protein L20.

In terms of biological role, this protein binds to 23S rRNA in the presence of protein L20. In Sinorhizobium medicae (strain WSM419) (Ensifer medicae), this protein is Large ribosomal subunit protein bL21.